A 61-amino-acid chain; its full sequence is Large ribosomal subunit protein bL32 (61 aa).

Residues 1-16 (MAVPKRKTSPSKRGMR) show a composition bias toward basic residues. Positions 1–61 (MAVPKRKTSP…RSVLTPKNSG (61 aa)) are disordered. Basic and acidic residues predominate over residues 28 to 44 (VEDKDSGELRRPHHIDL).

This sequence belongs to the bacterial ribosomal protein bL32 family.

The chain is Large ribosomal subunit protein bL32 from Bartonella bacilliformis (strain ATCC 35685 / KC583 / Herrer 020/F12,63).